A 251-amino-acid chain; its full sequence is tRNA (guanine-N(1)-)-methyltransferase (251 aa).

S-adenosyl-L-methionine contacts are provided by residues glycine 122 and 142-147 (IGDYVL). The interval 226 to 251 (RARRPDLFATRPQPNRQKPPKNTTDG) is disordered. A compositionally biased stretch (polar residues) spans 237 to 251 (PQPNRQKPPKNTTDG).

Belongs to the RNA methyltransferase TrmD family. In terms of assembly, homodimer.

It is found in the cytoplasm. The catalysed reaction is guanosine(37) in tRNA + S-adenosyl-L-methionine = N(1)-methylguanosine(37) in tRNA + S-adenosyl-L-homocysteine + H(+). In terms of biological role, specifically methylates guanosine-37 in various tRNAs. In Rhodopseudomonas palustris (strain BisB18), this protein is tRNA (guanine-N(1)-)-methyltransferase.